The chain runs to 596 residues: Heat shock factor protein 5 (596 aa).

A DNA-binding region spans residues 10 to 200; sequence NPNNFPAKLW…FHRSFRRDSL (191 aa). Residues 541 to 576 are disordered; that stretch reads EMGPASKPSEDTGLATPARYREHRSNSQQGKSPDLH. Residue serine 572 is modified to Phosphoserine.

The protein belongs to the HSF family. As to quaternary structure, homooligomer.

It localises to the nucleus. It is found in the chromosome. Functionally, DNA-binding transcription factor that is essential for male fertility, spermatogenesis and meiotic prophase progression in spermatocytes under non-stress conditions. Positvely and negatively regulates gene expression to ensure progression of meiotic prophase beyond pachytene stage in spermatocytes. Plays a role in male germline meiotic sex chromosome remodeling and silencing through regulation of SMARCA4. In Homo sapiens (Human), this protein is Heat shock factor protein 5 (HSF5).